The sequence spans 37 residues: Large ribosomal subunit protein bL36 (37 aa).

Belongs to the bacterial ribosomal protein bL36 family.

In Idiomarina loihiensis (strain ATCC BAA-735 / DSM 15497 / L2-TR), this protein is Large ribosomal subunit protein bL36.